The sequence spans 905 residues: Patched domain-containing protein 3 (905 aa).

The disordered stretch occupies residues 1-67 (MISSKVAPGE…PVGQEAPPPR (67 aa)). Residues 94-114 (WLFLLGPVLLTASLGTGLIFL) form a helical membrane-spanning segment. Residues Asn-146, Asn-199, Asn-229, and Asn-233 are each glycosylated (N-linked (GlcNAc...) asparagine). 6 helical membrane-spanning segments follow: residues 337-357 (TVIP…VVSC), 369-389 (VAVF…GLML), 391-411 (IGVP…GVGV), 441-461 (VAVS…TGIT), 475-495 (GTTL…IMAL), and 558-578 (FIVV…CFQV). Residues 338 to 495 (VIPLFHLAYI…ITCFGAIMAL (158 aa)) enclose the SSD domain. N-linked (GlcNAc...) asparagine glycosylation is found at Asn-647, Asn-661, and Asn-692. Helical transmembrane passes span 759-779 (VMIA…HPVC), 781-801 (LWVT…MAFW), 813-833 (LVIC…AFVS), 849-869 (LLGY…CVLA), and 882-902 (IMFL…PVFL).

This sequence belongs to the patched family. In terms of tissue distribution, expressed in germ cells of the testis (at protein level).

It localises to the cell projection. It is found in the cilium. The protein resides in the flagellum membrane. The protein localises to the endoplasmic reticulum membrane. In terms of biological role, may play a role in sperm development or sperm function. However, does not appear to have an essential role in spermatogenesis or male fertility. This is Patched domain-containing protein 3 from Rattus norvegicus (Rat).